The sequence spans 252 residues: Large ribosomal subunit protein uL4 (252 aa).

The protein belongs to the universal ribosomal protein uL4 family. Part of the 50S ribosomal subunit.

Functionally, one of the primary rRNA binding proteins, this protein initially binds near the 5'-end of the 23S rRNA. It is important during the early stages of 50S assembly. It makes multiple contacts with different domains of the 23S rRNA in the assembled 50S subunit and ribosome. Forms part of the polypeptide exit tunnel. This chain is Large ribosomal subunit protein uL4, found in Archaeoglobus fulgidus (strain ATCC 49558 / DSM 4304 / JCM 9628 / NBRC 100126 / VC-16).